Reading from the N-terminus, the 307-residue chain is Lipoyl synthase (307 aa).

Positions 55, 60, 66, 81, 85, 88, and 292 each coordinate [4Fe-4S] cluster. One can recognise a Radical SAM core domain in the interval tryptophan 67–serine 281.

The protein belongs to the radical SAM superfamily. Lipoyl synthase family. It depends on [4Fe-4S] cluster as a cofactor.

It is found in the cytoplasm. It catalyses the reaction [[Fe-S] cluster scaffold protein carrying a second [4Fe-4S](2+) cluster] + N(6)-octanoyl-L-lysyl-[protein] + 2 oxidized [2Fe-2S]-[ferredoxin] + 2 S-adenosyl-L-methionine + 4 H(+) = [[Fe-S] cluster scaffold protein] + N(6)-[(R)-dihydrolipoyl]-L-lysyl-[protein] + 4 Fe(3+) + 2 hydrogen sulfide + 2 5'-deoxyadenosine + 2 L-methionine + 2 reduced [2Fe-2S]-[ferredoxin]. It functions in the pathway protein modification; protein lipoylation via endogenous pathway; protein N(6)-(lipoyl)lysine from octanoyl-[acyl-carrier-protein]: step 2/2. In terms of biological role, catalyzes the radical-mediated insertion of two sulfur atoms into the C-6 and C-8 positions of the octanoyl moiety bound to the lipoyl domains of lipoate-dependent enzymes, thereby converting the octanoylated domains into lipoylated derivatives. This Mycobacterium avium (strain 104) protein is Lipoyl synthase.